The sequence spans 496 residues: GTPase Der (496 aa).

EngA-type G domains are found at residues 3 to 166 (PVIA…VGKF) and 209 to 382 (VKLA…TCAT). Residues 9–16 (GRPNVGKS), 56–60 (DTGGI), 118–121 (NKTD), 215–222 (GRPNVGKS), 262–266 (DTAGV), and 327–330 (NKWD) each bind GTP. The 85-residue stretch at 383–467 (RRVGTSMLTR…PIRIQFKEGE (85 aa)) folds into the KH-like domain.

It belongs to the TRAFAC class TrmE-Era-EngA-EngB-Septin-like GTPase superfamily. EngA (Der) GTPase family. Associates with the 50S ribosomal subunit.

GTPase that plays an essential role in the late steps of ribosome biogenesis. In Proteus mirabilis (strain HI4320), this protein is GTPase Der.